A 323-amino-acid chain; its full sequence is Estradiol 17 beta-dehydrogenase 5 (323 aa).

Residues 20–24 (GFGTY) and Asp50 each bind NADP(+). Tyr55 (proton donor) is an active-site residue. His117 contacts substrate. Residues 166–167 (SN), Gln190, 216–221 (YSALGS), and 270–280 (KSFSEKRIKEN) each bind NADP(+).

Belongs to the aldo/keto reductase family. As to quaternary structure, monomer. Post-translationally, three forms are detected, probably due to post-translational modifications. In terms of tissue distribution, mainly found in liver. Also expressed weakly in kidney.

Functionally, active toward androgens, estrogens, and xenobiotic substrates. Also exhibits low 20 alpha-HSD activity. Shows a-stereospecificity in hydrogen transfer between cofactors and substrates (A-specific). Preferentially catalyzes the reduction of 4-androstenedione, 5-alpha-androstane-3,17-dione, androsterone and dehydroepiandrosterone to testosterone, dihydrotestosterone, 5-alpha-androstane-3-alpha,17-beta-diol and 5-androstene-3-beta,17-beta-diol, respectively. This chain is Estradiol 17 beta-dehydrogenase 5 (Akr1c6), found in Mus musculus (Mouse).